The sequence spans 314 residues: Methionyl-tRNA formyltransferase (314 aa).

Residue 113–116 (SLLP) coordinates (6S)-5,6,7,8-tetrahydrofolate.

This sequence belongs to the Fmt family.

The enzyme catalyses L-methionyl-tRNA(fMet) + (6R)-10-formyltetrahydrofolate = N-formyl-L-methionyl-tRNA(fMet) + (6S)-5,6,7,8-tetrahydrofolate + H(+). In terms of biological role, attaches a formyl group to the free amino group of methionyl-tRNA(fMet). The formyl group appears to play a dual role in the initiator identity of N-formylmethionyl-tRNA by promoting its recognition by IF2 and preventing the misappropriation of this tRNA by the elongation apparatus. The protein is Methionyl-tRNA formyltransferase of Pseudomonas savastanoi pv. phaseolicola (strain 1448A / Race 6) (Pseudomonas syringae pv. phaseolicola (strain 1448A / Race 6)).